The following is a 494-amino-acid chain: Glycerol kinase (494 aa).

Position 12 (T12) interacts with ADP. T12, T13, and S14 together coordinate ATP. T12 contributes to the sn-glycerol 3-phosphate binding site. R16 provides a ligand contact to ADP. Residues R82, E83, Y134, and D243 each coordinate sn-glycerol 3-phosphate. 5 residues coordinate glycerol: R82, E83, Y134, D243, and Q244. 2 residues coordinate ADP: T265 and G308. 4 residues coordinate ATP: T265, G308, Q312, and G408. Positions 408 and 412 each coordinate ADP.

It belongs to the FGGY kinase family.

It carries out the reaction glycerol + ATP = sn-glycerol 3-phosphate + ADP + H(+). Its pathway is polyol metabolism; glycerol degradation via glycerol kinase pathway; sn-glycerol 3-phosphate from glycerol: step 1/1. Its activity is regulated as follows. Inhibited by fructose 1,6-bisphosphate (FBP). Its function is as follows. Key enzyme in the regulation of glycerol uptake and metabolism. Catalyzes the phosphorylation of glycerol to yield sn-glycerol 3-phosphate. In Marinomonas sp. (strain MWYL1), this protein is Glycerol kinase.